The chain runs to 548 residues: Probable malate:quinone oxidoreductase (548 aa).

The tract at residues Asp521–Leu548 is disordered. Positions Pro530–Lys541 are enriched in low complexity.

Belongs to the MQO family. FAD is required as a cofactor.

The enzyme catalyses (S)-malate + a quinone = a quinol + oxaloacetate. Its pathway is carbohydrate metabolism; tricarboxylic acid cycle; oxaloacetate from (S)-malate (quinone route): step 1/1. In Escherichia coli (strain 55989 / EAEC), this protein is Probable malate:quinone oxidoreductase.